The following is a 278-amino-acid chain: Large ribosomal subunit protein uL2 (278 aa).

Disordered regions lie at residues 1–58 (MGIR…GGGH) and 210–278 (GRMR…GKKR). Positions 23–33 (EVTRSEPEKSL) are enriched in basic and acidic residues. Low complexity predominate over residues 40–49 (SGGRNSTGRI). Composition is skewed to basic residues over residues 210 to 220 (GRMRWKGKRPS) and 269 to 278 (VRRRRTGKKR).

The protein belongs to the universal ribosomal protein uL2 family. As to quaternary structure, part of the 50S ribosomal subunit. Forms a bridge to the 30S subunit in the 70S ribosome.

One of the primary rRNA binding proteins. Required for association of the 30S and 50S subunits to form the 70S ribosome, for tRNA binding and peptide bond formation. It has been suggested to have peptidyltransferase activity; this is somewhat controversial. Makes several contacts with the 16S rRNA in the 70S ribosome. The polypeptide is Large ribosomal subunit protein uL2 (Beutenbergia cavernae (strain ATCC BAA-8 / DSM 12333 / CCUG 43141 / JCM 11478 / NBRC 16432 / NCIMB 13614 / HKI 0122)).